A 187-amino-acid chain; its full sequence is Putative glutathione-dependent formaldehyde-activating enzyme (187 aa).

One can recognise a CENP-V/GFA domain in the interval 20–166 (FQGGVLKCKC…FESLGLESYD (147 aa)). Zn(2+)-binding residues include Cys-27, Cys-29, Cys-48, Cys-50, Cys-53, Cys-95, and Cys-98.

Belongs to the Gfa family. Zn(2+) serves as cofactor.

It catalyses the reaction S-(hydroxymethyl)glutathione = glutathione + formaldehyde. It functions in the pathway one-carbon metabolism; formaldehyde degradation; formate from formaldehyde (glutathione route): step 1/3. Its function is as follows. Catalyzes the condensation of formaldehyde and glutathione to S-hydroxymethylglutathione. The chain is Putative glutathione-dependent formaldehyde-activating enzyme from Verticillium alfalfae (strain VaMs.102 / ATCC MYA-4576 / FGSC 10136) (Verticillium wilt of alfalfa).